The following is a 445-amino-acid chain: tRNA modification GTPase MnmE (445 aa).

Positions 20, 79, and 119 each coordinate (6S)-5-formyl-5,6,7,8-tetrahydrofolate. Residues 215–371 (GLKLAIIGPP…ILKNIENIAE (157 aa)) form the TrmE-type G domain. N225 serves as a coordination point for K(+). GTP is bound by residues 225–230 (NTGKSS), 244–250 (SNIAGTT), and 269–272 (DTAG). S229 provides a ligand contact to Mg(2+). The K(+) site is built by S244, I246, and T249. T250 contacts Mg(2+). K445 is a binding site for (6S)-5-formyl-5,6,7,8-tetrahydrofolate.

The protein belongs to the TRAFAC class TrmE-Era-EngA-EngB-Septin-like GTPase superfamily. TrmE GTPase family. In terms of assembly, homodimer. Heterotetramer of two MnmE and two MnmG subunits. K(+) serves as cofactor.

It localises to the cytoplasm. Its function is as follows. Exhibits a very high intrinsic GTPase hydrolysis rate. Involved in the addition of a carboxymethylaminomethyl (cmnm) group at the wobble position (U34) of certain tRNAs, forming tRNA-cmnm(5)s(2)U34. This chain is tRNA modification GTPase MnmE, found in Rickettsia prowazekii (strain Madrid E).